Reading from the N-terminus, the 480-residue chain is Voltage-gated potassium channel regulatory subunit KCNG2 (480 aa).

Disordered regions lie at residues 1-25 (MARL…GRGG) and 144-167 (AAEA…LGSG). Residues 1–187 (MARLPGHPEV…DVVENPHSGL (187 aa)) are Cytoplasmic-facing. The chain crosses the membrane as a helical span at residues 188–209 (AGKLFAYVSVAFVAVTAVGLCL). The Extracellular portion of the chain corresponds to 210–230 (STMPDVRAEEERGECSTKCRN). Residues 231–252 (LFVLETVCVAWFSFEFLLRSLQ) traverse the membrane as a helical segment. Topologically, residues 253–263 (AESKCAFLRTP) are cytoplasmic. Residues 264-284 (LAIIDILAILPFYVSLLAGLA) traverse the membrane as a helical segment. The Extracellular portion of the chain corresponds to 285–296 (AGPTGSKMLERA). Residues 297–317 (GLVLRLLRALRVLYVMRLARH) traverse the membrane as a helical; Voltage-sensor segment. Topologically, residues 318–332 (SLGLRSLGLTVRRCA) are cytoplasmic. The helical transmembrane segment at 333–354 (REFGLLLLFLCVAMALFAPLVH) threads the bilayer. Residues 355 to 369 (LAERELGAHRDFSSV) are Extracellular-facing. Positions 370-381 (PASYWWAVISMT) form an intramembrane region, helical. A Selectivity filter motif is present at residues 382–387 (TVGYGD). The stretch at 382 to 389 (TVGYGDMV) is an intramembrane region. Topologically, residues 390–396 (PRSLPGQ) are extracellular. The chain crosses the membrane as a helical span at residues 397–425 (VVALSSILSGILLMAFPVTSIFHTFSRSY). The Cytoplasmic segment spans residues 426-480 (SELKEQQQRAASPEPVLREDSTRDDSTRSASATEDSSQDPETAGAAGSLPGPVGP). A disordered region spans residues 429–480 (KEQQQRAASPEPVLREDSTRDDSTRSASATEDSSQDPETAGAAGSLPGPVGP). The segment covering 441–452 (VLREDSTRDDST) has biased composition (basic and acidic residues).

Belongs to the potassium channel family. G (TC 1.A.1.2) subfamily. Kv6.2/KCNG2 sub-subfamily. As to quaternary structure, heterodimer with KCNB1. Highly expressed in heart, in particular in right and left atrium, and detected at lower levels in the right and left ventricle.

It is found in the cell membrane. Regulatory alpha-subunit of the voltage-gated potassium (Kv) channel which, when coassembled with KCNB1, can modulate the kinetics and conductance-voltage relationship. Modulates channel activity by shifting the threshold and the half-maximal activation to more negative values. Potassium channel subunit that does not form functional channels by itself. This is Voltage-gated potassium channel regulatory subunit KCNG2 from Rattus norvegicus (Rat).